Here is a 337-residue protein sequence, read N- to C-terminus: Heat-inducible transcription repressor HrcA (337 aa).

Belongs to the HrcA family.

Negative regulator of class I heat shock genes (grpE-dnaK-dnaJ and groELS operons). Prevents heat-shock induction of these operons. The chain is Heat-inducible transcription repressor HrcA from Pseudarthrobacter chlorophenolicus (strain ATCC 700700 / DSM 12829 / CIP 107037 / JCM 12360 / KCTC 9906 / NCIMB 13794 / A6) (Arthrobacter chlorophenolicus).